The chain runs to 405 residues: MTTDLTGRARAQADDLISRLGLAGDPLGLGGNPGDHRVVVAMSGGVDSSVTAALLHHLGYDVVGVTLQLYDHGAAMAKKGACCAGQDIYDAKRVAEACGFRHYVLDYESRFREAVIEEFADTYLAGFTPIPCVRCNQTVKFADLLTTARQLGAVCMATGHYIQRVDGPNGAELRRAADAGKDQSYFLFATTHDQLDFLRFPLGHLNKDQTRELAEAFGLIVADKPDSQDICFVPNGRYVDIVEKVRPGASRPGEIVHVDGRVLGTHEGVIRYTVGQRRGLKIAVGDPLYVVRLDAAKAEVVVGPREALEIDTIALKDINWLGDEAPLDGAPVRVKVRSTRPPVPAALSVDGDDIRVVLARGEEGVAPGQACVFYSSDDEDRVLGGGWITSTSGGSGGSSGVRLIG.

Residues 41–48 (AMSGGVDS) and L67 contribute to the ATP site. C135 acts as the Nucleophile in catalysis. C135 and C231 are disulfide-bonded. Residue G159 coordinates ATP. The interval 181–183 (KDQ) is interaction with tRNA. C231 acts as the Cysteine persulfide intermediate in catalysis.

It belongs to the MnmA/TRMU family.

The protein resides in the cytoplasm. It carries out the reaction S-sulfanyl-L-cysteinyl-[protein] + uridine(34) in tRNA + AH2 + ATP = 2-thiouridine(34) in tRNA + L-cysteinyl-[protein] + A + AMP + diphosphate + H(+). In terms of biological role, catalyzes the 2-thiolation of uridine at the wobble position (U34) of tRNA, leading to the formation of s(2)U34. In Maricaulis maris (strain MCS10) (Caulobacter maris), this protein is tRNA-specific 2-thiouridylase MnmA.